A 326-amino-acid polypeptide reads, in one-letter code: Triacylglycerol lipase 2 (326 aa).

The short motif at 142 to 146 (AHSMG) is the (A/G)XSXG lipase motif element.

As to quaternary structure, interacts with MIA40; forms mixed disulfide intermediates with MIA40.

It is found in the mitochondrion. It localises to the mitochondrion intermembrane space. The catalysed reaction is a triacylglycerol + H2O = a diacylglycerol + a fatty acid + H(+). It catalyses the reaction 1,2,3-tri-(9Z-octadecenoyl)-glycerol + H2O = di-(9Z)-octadecenoylglycerol + (9Z)-octadecenoate + H(+). It carries out the reaction 1,2,3-tributanoylglycerol + H2O = dibutanoylglycerol + butanoate + H(+). The enzyme catalyses 1,2,3-trioctanoylglycerol + H2O = dioctanoylglycerol + octanoate + H(+). The catalysed reaction is di-(9Z)-octadecenoylglycerol + H2O = (9Z-octadecenoyl)-glycerol + (9Z)-octadecenoate + H(+). It catalyses the reaction dioctanoylglycerol + H2O = octanoylglycerol + octanoate + H(+). In terms of biological role, mitochondrial triacylglycerol (TAG) lipase with activity toward long-chain diacylglycerols (DAGs) and triacylglycerols (TAGs). Involved in mitochondrial lipid metabolism. This Saccharomyces cerevisiae (strain ATCC 204508 / S288c) (Baker's yeast) protein is Triacylglycerol lipase 2 (TGL2).